We begin with the raw amino-acid sequence, 380 residues long: Cyclohex-1-ene-1-carbonyl-CoA dehydrogenase (380 aa).

Asp-91 serves as the catalytic Proton acceptor. Residues Leu-122, Ala-124, Thr-125, Ser-131, and Thr-157 each contribute to the FAD site. Position 131 (Ser-131) interacts with cyclohex-1-ene-1-carbonyl-CoA. Ser-131 contacts cyclohexa-1,5-diene-1-carbonyl-CoA. Positions 178, 242, and 363 each coordinate cyclohex-1-ene-1-carbonyl-CoA. Cyclohexa-1,5-diene-1-carbonyl-CoA-binding residues include Lys-178, Arg-242, and Thr-363. Positions 365 and 367 each coordinate FAD. Position 375 (Arg-375) interacts with cyclohex-1-ene-1-carbonyl-CoA. A cyclohexa-1,5-diene-1-carbonyl-CoA-binding site is contributed by Arg-375.

It belongs to the acyl-CoA dehydrogenase family. Homotetramer. FAD is required as a cofactor.

It carries out the reaction cyclohex-1-ene-1-carbonyl-CoA + oxidized [electron-transfer flavoprotein] + H(+) = cyclohexa-1,5-diene-1-carbonyl-CoA + reduced [electron-transfer flavoprotein]. Its function is as follows. Acyl-CoA dehydrogenase involved in the anaerobic degradation of cyclohexane carboxylic acid (CHC). Catalyzes the 1,4-dehydrogenation at C3 and C6 of cyclohex-1-ene-1-carbonyl-CoA (CHeneCoA or Ch1CoA) to cyclohexa-1,5-diene-1-carbonyl-CoA (CHdieneCoA or Ch1,5CoA). Also able to catalyze, at a lower rate, the dehydrogenation at C3 and C4 of CHdieneCoA to benzoyl-CoA. This chain is Cyclohex-1-ene-1-carbonyl-CoA dehydrogenase, found in Geobacter metallireducens (strain ATCC 53774 / DSM 7210 / GS-15).